The primary structure comprises 286 residues: 33 kDa chaperonin (286 aa).

Cystine bridges form between cysteine 233-cysteine 235 and cysteine 267-cysteine 270.

It belongs to the HSP33 family. Under oxidizing conditions two disulfide bonds are formed involving the reactive cysteines. Under reducing conditions zinc is bound to the reactive cysteines and the protein is inactive.

The protein resides in the cytoplasm. Redox regulated molecular chaperone. Protects both thermally unfolding and oxidatively damaged proteins from irreversible aggregation. Plays an important role in the bacterial defense system toward oxidative stress. The chain is 33 kDa chaperonin from Histophilus somni (strain 129Pt) (Haemophilus somnus).